A 338-amino-acid chain; its full sequence is 1-aminocyclopropane-1-carboxylate deaminase (338 aa).

K51 is subject to N6-(pyridoxal phosphate)lysine. S78 serves as the catalytic Nucleophile.

This sequence belongs to the ACC deaminase/D-cysteine desulfhydrase family. It depends on pyridoxal 5'-phosphate as a cofactor.

It carries out the reaction 1-aminocyclopropane-1-carboxylate + H2O = 2-oxobutanoate + NH4(+). Functionally, catalyzes a cyclopropane ring-opening reaction, the irreversible conversion of 1-aminocyclopropane-1-carboxylate (ACC) to ammonia and alpha-ketobutyrate. Allows growth on ACC as a nitrogen source. This is 1-aminocyclopropane-1-carboxylate deaminase from Enterobacter cloacae.